The following is a 67-amino-acid chain: Large ribosomal subunit protein uL29 (67 aa).

This sequence belongs to the universal ribosomal protein uL29 family.

The chain is Large ribosomal subunit protein uL29 from Sphingopyxis alaskensis (strain DSM 13593 / LMG 18877 / RB2256) (Sphingomonas alaskensis).